The primary structure comprises 65 residues: Large ribosomal subunit protein bL35 (65 aa).

Residues 1-16 show a composition bias toward basic residues; sequence MPKQKTHRASAKRFKR. Residues 1–20 form a disordered region; it reads MPKQKTHRASAKRFKRTGSG.

The protein belongs to the bacterial ribosomal protein bL35 family.

The chain is Large ribosomal subunit protein bL35 from Streptococcus equi subsp. equi (strain 4047).